The chain runs to 74 residues: Protein translocase subunit SecE (74 aa).

Topologically, residues 1–36 (MKTDFNQKIEQLKEFIEECRRVWLVLKKPTKDEYLA) are cytoplasmic. A helical transmembrane segment spans residues 37-62 (VAKVTALGISLLGIIGYIIHVPATYI). The Extracellular portion of the chain corresponds to 63 to 74 (KGILKPPTTPRV).

Belongs to the SecE/SEC61-gamma family. As to quaternary structure, component of the Sec protein translocase complex. Heterotrimer consisting of alpha (SecY), beta (SecG) and gamma (SecE) subunits. The heterotrimers can form oligomers, although 1 heterotrimer is thought to be able to translocate proteins. Interacts with the ribosome. May interact with SecDF, and other proteins may be involved.

The protein localises to the cell membrane. Functionally, essential subunit of the protein translocation channel SecYEG. Clamps together the 2 halves of SecY. May contact the channel plug during translocation. In Methanocaldococcus jannaschii (strain ATCC 43067 / DSM 2661 / JAL-1 / JCM 10045 / NBRC 100440) (Methanococcus jannaschii), this protein is Protein translocase subunit SecE.